Consider the following 180-residue polypeptide: MTDTRKFKATDLFSFNNINLDPLTETFNISFYLSYLNKWPSLCVVQESDLSDPTLMGYIMGKSEGTGKEWHTHVTAITVAPNSRRLGLARTMMDYLETVGNSENAFFVDLFVRASNALAIDFYKGLGYSVYRRVIGYYSNPHGKDEDSFDMRKPLSRDVNRESIRENGENFKCSPADVSF.

An N-acetyltransferase domain is found at 2–156 (TDTRKFKATD…DSFDMRKPLS (155 aa)).

Belongs to the acetyltransferase family. In terms of assembly, component of the N-terminal acetyltransferase B (NatB) complex.

Its subcellular location is the cytoplasm. It is found in the nucleus. The enzyme catalyses N-terminal L-methionyl-L-asparaginyl-[protein] + acetyl-CoA = N-terminal N(alpha)-acetyl-L-methionyl-L-asparaginyl-[protein] + CoA + H(+). The catalysed reaction is N-terminal L-methionyl-L-glutaminyl-[protein] + acetyl-CoA = N-terminal N(alpha)-acetyl-L-methionyl-L-glutaminyl-[protein] + CoA + H(+). It catalyses the reaction N-terminal L-methionyl-L-aspartyl-[protein] + acetyl-CoA = N-terminal N(alpha)-acetyl-L-methionyl-L-aspartyl-[protein] + CoA + H(+). It carries out the reaction N-terminal L-methionyl-L-glutamyl-[protein] + acetyl-CoA = N-terminal N(alpha)-acetyl-L-methionyl-L-glutamyl-[protein] + CoA + H(+). Catalytic subunit of the NatB N-terminal acetyltransferase, which catalyzes acetylation of the amino-terminal methionine residues of all proteins beginning with Met-Asp or Met-Glu and of some proteins beginning with Met-Asn, Met-Gln or Met-Met. This chain is N-terminal acetyltransferase B complex catalytic subunit naa20 (naa20), found in Schizosaccharomyces pombe (strain 972 / ATCC 24843) (Fission yeast).